We begin with the raw amino-acid sequence, 373 residues long: Chloroperoxidase (373 aa).

The signal sequence occupies residues 1 to 20 (MFSKVLPFVGAVAALPHSVR). Residue Q21 is modified to Pyrrolidone carboxylic acid. The N-linked (GlcNAc...) asparagine glycan is linked to N33. C50 provides a ligand contact to heme. C100 and C108 are oxidised to a cystine. N114 is a glycosylation site (N-linked (GlcNAc...) asparagine). The Mn(2+) site is built by E125, H126, and S129. The active site involves E204. N237 carries an N-linked (GlcNAc...) asparagine glycan. An O-linked (Man) threonine glycan is attached at T259. O-linked (Man) serine glycans are attached at residues S260, S262, S263, and S269. A glycan (O-linked (Man) threonine) is linked at T271. A glycan (O-linked (Man) serine) is linked at S272. A glycan (O-linked (Man) threonine) is linked at T273. O-linked (Man...) threonine glycosylation is found at T296, T304, and T314. Positions 322–373 (EAAPAATTSMAVFKNPYLEAIGTQDIKNQQAYVSSKAAAMASAMAANKARNL) are excised as a propeptide.

This sequence belongs to the chloroperoxidase family. The cofactor is heme b. Requires Mn(2+) as cofactor. Post-translationally, N- and O-glycosylated.

The enzyme catalyses RH + Cl(-) + H2O2 = RCl + 2 H2O.. In terms of biological role, catalyzes peroxidative halogenations involved in the biosynthesis of clardariomycin (2,2-dichloro-1,3-cyclo-pentenedione). The enzyme also has potent catalase activity and in the absence of halide ion, acts as a peroxidase similar to plant peroxidases. This Leptoxyphium fumago (Caldariomyces fumago) protein is Chloroperoxidase (CPO).